A 93-amino-acid chain; its full sequence is HssA/B-like protein 26 (93 aa).

Belongs to the hssA/B family.

This Dictyostelium discoideum (Social amoeba) protein is HssA/B-like protein 26 (hssl26).